The primary structure comprises 812 residues: MIMQSLFSNKYKFKDTEEKLNAYWDKIKLYKWKNLQGKQFIIDTPPPTISGQLHIGHVFSYCHTDFIARYQRMLGKDVLYPIGFDDNGLPTERLVEKIKKVRAADIDRKEFKALCNEVSAKFRMEFKILFQSLGISYDWDLEYHTISEEIQKLSQMSFIALYNMGKIYRKLQPIFWDCADRTAIARVEVEEKEMSSFMSTIAFSTEAGERINIATTRPELMPACVALFFNPLDIRYQHLQGQYAIVPIFGNKVPILSDEQVKIDKGTGLVMCCTFGDELDVYWWNKHNLNTQIIISKSGTLDLKHNIAETDTLSGKLHGVSIVEARKLVLETLSKCNLLIKKEEILHNVKCAERSGMPIEILLSNQWFIKVVEVKHELLEQVRKINWYPQSMRKQIEMWIDGLNWDWCISRQRYFGIPFPVWYSKRDNEEIIIPDVNELPIDPTETLPQGYSKEEVEADVDVMDTWATSSLSPQFNSIHTGINSIPLVPASLRAQSHEIIRSWAFYTILQAYYHHNSIPWENIMVSGWCLAADKSKMSKSKGNALIPNQLLQEYGADVIRYWAANSRLGSDTVFSDEVLQLGKRLVTKLWNASKFVSMFVSQCQIPDLNYVTETMDKWVLTKLYKVIVKATESFDVFEYCVALDYIESFFWKDFCDNYLELVKKRAYGESVTSKENLSAVNTLSFVLTTLLKMLAPFMPYITEEIYSTLYNNGSIHDHDNWPIVNTSLCNEMDEQLGEDFIEILNQVRKIKANAQLSVKCKIYKLIINSENYDFPTSWENDLKAVCNAEHIVRDKRTSYYDDKFLVSVQFAS.

A 'HIGH' region motif is present at residues 47-57 (PTISGQLHIGH). The 'KMSKS' region motif lies at 536-540 (KMSKS). Lys539 serves as a coordination point for ATP.

This sequence belongs to the class-I aminoacyl-tRNA synthetase family. ValS type 2 subfamily. Monomer.

It localises to the cytoplasm. It catalyses the reaction tRNA(Val) + L-valine + ATP = L-valyl-tRNA(Val) + AMP + diphosphate. In terms of biological role, catalyzes the attachment of valine to tRNA(Val). As ValRS can inadvertently accommodate and process structurally similar amino acids such as threonine, to avoid such errors, it has a 'posttransfer' editing activity that hydrolyzes mischarged Thr-tRNA(Val) in a tRNA-dependent manner. The sequence is that of Valine--tRNA ligase from Ehrlichia ruminantium (strain Gardel).